The sequence spans 568 residues: Small ribosomal subunit protein bS1 (568 aa).

S1 motif domains follow at residues 39-100, 118-184, 205-273, 290-360, 377-447, and 464-533; these read KTVV…LSRE, GEFV…VSRR, GMVL…LGIK, GKQM…LSIK, GTII…LGIK, and GTIV…LSVK.

The protein belongs to the bacterial ribosomal protein bS1 family.

Binds mRNA; thus facilitating recognition of the initiation point. It is needed to translate mRNA with a short Shine-Dalgarno (SD) purine-rich sequence. This Rickettsia conorii (strain ATCC VR-613 / Malish 7) protein is Small ribosomal subunit protein bS1 (rpsA).